The chain runs to 323 residues: Probable proline iminopeptidase (323 aa).

Residues 37 to 301 (VVLHGGPGSR…VIVDEAGHDA (265 aa)) form the AB hydrolase-1 domain. Ser-114 serves as the catalytic Nucleophile. Residue Asp-271 is part of the active site. Catalysis depends on His-299, which acts as the Proton donor.

This sequence belongs to the peptidase S33 family.

It is found in the cytoplasm. The catalysed reaction is Release of N-terminal proline from a peptide.. Its function is as follows. Specifically catalyzes the removal of N-terminal proline residues from peptides. This Streptomyces coelicolor (strain ATCC BAA-471 / A3(2) / M145) protein is Probable proline iminopeptidase.